The following is a 141-amino-acid chain: Organic hydroperoxide resistance protein-like 1 (141 aa).

Residues 1–20 form a disordered region; sequence MAVNYETKATNTGGRNGHVQ.

The protein belongs to the OsmC/Ohr family.

This Staphylococcus saprophyticus subsp. saprophyticus (strain ATCC 15305 / DSM 20229 / NCIMB 8711 / NCTC 7292 / S-41) protein is Organic hydroperoxide resistance protein-like 1.